Here is a 252-residue protein sequence, read N- to C-terminus: Chitooligosaccharide deacetylase (252 aa).

Residues H61 and H125 each contribute to the Mg(2+) site.

The protein belongs to the YdjC deacetylase family. ChbG subfamily. Homodimer. Mg(2+) serves as cofactor.

It localises to the cytoplasm. It carries out the reaction N,N'-diacetylchitobiose + H2O = N-acetyl-beta-D-glucosaminyl-(1-&gt;4)-D-glucosamine + acetate. The enzyme catalyses diacetylchitobiose-6'-phosphate + H2O = N'-monoacetylchitobiose-6'-phosphate + acetate. It participates in glycan degradation; chitin degradation. Involved in the degradation of chitin. ChbG is essential for growth on the acetylated chitooligosaccharides chitobiose and chitotriose but is dispensable for growth on cellobiose and chitosan dimer, the deacetylated form of chitobiose. Deacetylation of chitobiose-6-P and chitotriose-6-P is necessary for both the activation of the chb promoter by the regulatory protein ChbR and the hydrolysis of phosphorylated beta-glucosides by the phospho-beta-glucosidase ChbF. Catalyzes the removal of only one acetyl group from chitobiose-6-P to yield monoacetylchitobiose-6-P, the inducer of ChbR and the substrate of ChbF. This chain is Chitooligosaccharide deacetylase, found in Klebsiella pneumoniae subsp. pneumoniae (strain ATCC 700721 / MGH 78578).